A 213-amino-acid chain; its full sequence is Phosphoribosyl-dephospho-CoA transferase (213 aa).

Active-site residues include D135 and D137.

Belongs to the MdcG family.

It catalyses the reaction apo-[malonate decarboxylase ACP] + 2'-(5''-triphospho-alpha-D-ribosyl)-3'-dephospho-CoA = holo-[malonate decarboxylase ACP] + diphosphate. Its function is as follows. Transfers 2'-(5-triphosphoribosyl)-3'-dephosphocoenzyme-A to the apo-[acyl-carrier-protein] of the malonate decarboxylase to yield holo-[acyl-carrier-protein]. This chain is Phosphoribosyl-dephospho-CoA transferase, found in Xanthomonas axonopodis pv. citri (strain 306).